Consider the following 432-residue polypeptide: Asparagine--tRNA ligase (432 aa).

The protein belongs to the class-II aminoacyl-tRNA synthetase family. As to quaternary structure, homodimer.

It localises to the cytoplasm. The catalysed reaction is tRNA(Asn) + L-asparagine + ATP = L-asparaginyl-tRNA(Asn) + AMP + diphosphate + H(+). The chain is Asparagine--tRNA ligase from Limosilactobacillus reuteri (strain DSM 20016) (Lactobacillus reuteri).